Here is a 404-residue protein sequence, read N- to C-terminus: Cysteine desulfurase IscS (404 aa).

Residues 75 to 76, Asn155, Gln183, and 203 to 205 contribute to the pyridoxal 5'-phosphate site; these read AT and TGH. At Lys206 the chain carries N6-(pyridoxal phosphate)lysine. Thr243 contacts pyridoxal 5'-phosphate. Cys328 serves as the catalytic Cysteine persulfide intermediate. Cys328 provides a ligand contact to [2Fe-2S] cluster.

This sequence belongs to the class-V pyridoxal-phosphate-dependent aminotransferase family. NifS/IscS subfamily. As to quaternary structure, homodimer. Forms a heterotetramer with IscU, interacts with other sulfur acceptors. It depends on pyridoxal 5'-phosphate as a cofactor.

It localises to the cytoplasm. It carries out the reaction (sulfur carrier)-H + L-cysteine = (sulfur carrier)-SH + L-alanine. It participates in cofactor biosynthesis; iron-sulfur cluster biosynthesis. Functionally, master enzyme that delivers sulfur to a number of partners involved in Fe-S cluster assembly, tRNA modification or cofactor biosynthesis. Catalyzes the removal of elemental sulfur atoms from cysteine to produce alanine. Functions as a sulfur delivery protein for Fe-S cluster synthesis onto IscU, an Fe-S scaffold assembly protein, as well as other S acceptor proteins. This chain is Cysteine desulfurase IscS, found in Enterobacter sp. (strain 638).